We begin with the raw amino-acid sequence, 146 residues long: Hemoglobin subunit beta (146 aa).

The Globin domain maps to 2-146 (HWTADEKQLI…VAHALALGYH (145 aa)). Heme b-binding residues include His-63 and His-92.

This sequence belongs to the globin family. As to quaternary structure, heterotetramer of two alpha chains and two beta chains. In terms of tissue distribution, red blood cells.

In terms of biological role, involved in oxygen transport from the lung to the various peripheral tissues. In Chrysemys picta bellii (Western painted turtle), this protein is Hemoglobin subunit beta (HBB).